A 507-amino-acid polypeptide reads, in one-letter code: Myocyte-specific enhancer factor 2A (507 aa).

The region spanning 3 to 57 is the MADS-box domain; it reads RKKIQITRIMDERNRQVTFTKRKFGLMKKAYELSVLCDCEIALIIFNSSNKLFQY. The residue at position 30 (lysine 30) is a Phosphoserine. A DNA-binding region (mef2-type) is located at residues 58 to 86; it reads ASTDMDKVLLKYTEYNEPHESRTNSDIVE. Serine 59 is modified (phosphoserine; by CK2). Serine 98 is modified (phosphoserine). The segment covering 173–183 has biased composition (low complexity); sequence TLTDSSMLSPP. Residues 173 to 229 form a disordered region; it reads TLTDSSMLSPPQTTLHRNVSPGAPQRPPSTGNAGGMLSTTDLTVPNGAGSSPVGNGF. Residues 209–229 are compositionally biased toward polar residues; the sequence is LSTTDLTVPNGAGSSPVGNGF. Serine 235 is modified (phosphoserine). The interval 243-270 is disordered; the sequence is GANSLGKVMPTKSPPPPGGGNLGMNSRK. Lysine 249 carries the post-translational modification N6-acetyllysine. Serine 255 carries the phosphoserine; by MAPK14 modification. Residues 266-283 are required for interaction with MAPKs; the sequence is MNSRKPDLRVVIPPSSKG. A beta domain region spans residues 289–296; that stretch reads SEEEELEL. Threonine 312 and threonine 319 each carry phosphothreonine; by MAPK7 and MAPK14. Threonine 312 carries the post-translational modification Phosphothreonine; by NLK. At serine 355 the chain carries Phosphoserine; by MAPK7. Residues 397 to 507 are disordered; that stretch reads NQNISIKSEP…KRMRMDAWVT (111 aa). An N6-acetyllysine; alternate modification is found at lysine 403. Residue lysine 403 forms a Glycyl lysine isopeptide (Lys-Gly) (interchain with G-Cter in SUMO); alternate linkage. Serine 408 bears the Phosphoserine; by CDK5 mark. Threonine 415 carries the phosphothreonine modification. Residues 420 to 429 are compositionally biased toward low complexity; that stretch reads QQQQQQQQQQ. Residues 430–445 show a composition bias toward pro residues; it reads QPPPPPQPQPQPPQPQ. Serine 453 bears the Phosphoserine; by MAPK mark. Positions 453–466 are enriched in low complexity; that stretch reads SPVDSLSSSSSSYD. 2 stretches are compositionally biased toward basic and acidic residues: residues 467–477 and 488–507; these read GSDREDPRGDF and NTED…AWVT.

Belongs to the MEF2 family. In terms of assembly, binds DNA as a homo- or heterodimer. Dimerizes with MEF2D. Interacts with HDAC7. Interacts with PIAS1; the interaction enhances sumoylation. Interacts with HDAC4, HDAC9 and SLC2A4RG. Interacts (via the N-terminal) with MAPK7; the interaction results in the phosphorylation and transcriptional activity of MEF2A. Post-translationally, constitutive phosphorylation on Ser-408 promotes Lys-403 sumoylation thus preventing acetylation at this site. Dephosphorylation on Ser-408 by PPP3CA upon neuron depolarization promotes a switch from sumoylation to acetylation on residue Lys-403 leading to inhibition of dendrite claw differentiation. Phosphorylation on Thr-312 and Thr-319 are the main sites involved in p38 MAPK signaling and activate transcription. Phosphorylated on these sites by MAPK14/p38alpha and MAPK11/p38beta, but not by MAPK13/p38delta nor by MAPK12/p38gamma. Phosphorylation on Ser-408 by CDK5 induced by neurotoxicity inhibits MEF2A transcriptional activation leading to apoptosis of cortical neurons. Phosphorylation on Thr-312, Thr-319 and Ser-355 can be induced by EGF. In terms of processing, sumoylation on Lys-403 is enhanced by PIAS1 and represses transcriptional activity. Phosphorylation on Ser-408 is required for sumoylation. Has no effect on nuclear location nor on DNA binding. Sumoylated with SUMO1 and, to a lesser extent with SUMO2 and SUMO3. PIASx facilitates sumoylation in postsynaptic dendrites in the cerebellar cortex and promotes their morphogenesis. Acetylation on Lys-403 activates transcriptional activity. Acetylated by p300 on several sites in diffentiating myocytes. Acetylation on Lys-4 increases DNA binding and transactivation. Hyperacetylation by p300 leads to enhanced cardiac myocyte growth and heart failure. Post-translationally, proteolytically cleaved in cerebellar granule neurons on several sites by caspase 3 and caspase 7 following neurotoxicity. Preferentially cleaves the CDK5-mediated hyperphosphorylated form which leads to neuron apoptosis and transcriptional inactivation. As to expression, isoform MEF2 and isoform MEFA are expressed only in skeletal and cardiac muscle and in the brain. Isoform RSRFC4 and isoform RSRFC9 are expressed in all tissues examined.

It is found in the nucleus. In terms of biological role, transcriptional activator which binds specifically to the MEF2 element, 5'-YTA[AT](4)TAR-3', found in numerous muscle-specific genes. Also involved in the activation of numerous growth factor- and stress-induced genes. Mediates cellular functions not only in skeletal and cardiac muscle development, but also in neuronal differentiation and survival. Plays diverse roles in the control of cell growth, survival and apoptosis via p38 MAPK signaling in muscle-specific and/or growth factor-related transcription. In cerebellar granule neurons, phosphorylated and sumoylated MEF2A represses transcription of NUR77 promoting synaptic differentiation. Associates with chromatin to the ZNF16 promoter. The sequence is that of Myocyte-specific enhancer factor 2A (MEF2A) from Homo sapiens (Human).